We begin with the raw amino-acid sequence, 473 residues long: 3-isopropylmalate dehydratase large subunit (473 aa).

Residues Cys-351, Cys-414, and Cys-417 each contribute to the [4Fe-4S] cluster site.

This sequence belongs to the aconitase/IPM isomerase family. LeuC type 1 subfamily. In terms of assembly, heterodimer of LeuC and LeuD. [4Fe-4S] cluster serves as cofactor.

It catalyses the reaction (2R,3S)-3-isopropylmalate = (2S)-2-isopropylmalate. It participates in amino-acid biosynthesis; L-leucine biosynthesis; L-leucine from 3-methyl-2-oxobutanoate: step 2/4. Its function is as follows. Catalyzes the isomerization between 2-isopropylmalate and 3-isopropylmalate, via the formation of 2-isopropylmaleate. This Paracidovorax citrulli (strain AAC00-1) (Acidovorax citrulli) protein is 3-isopropylmalate dehydratase large subunit.